The following is a 1799-amino-acid chain: 1,3-beta-glucan synthase component FKS1 (1799 aa).

A compositionally biased stretch (pro residues) spans 1-11 (MSYPNPPPPPK). Residues 1–136 (MSYPNPPPPP…SNAGHRPRDP (136 aa)) are disordered. Low complexity predominate over residues 12-23 (GSASFSSSSSDP). Over residues 51–64 (GAGGAGVAPPGQGG) the composition is skewed to gly residues. Residues 91 to 101 (ASESGWSQNEP) show a composition bias toward polar residues. The next 16 helical transmembrane spans lie at 431–451 (IWVLHISVFWFFTAYNAPSIY), 470–490 (LGGFVATLIMIAATLAEFSYI), 504–524 (LIFLLIILAITGGPSIYIAFF), 530–550 (VALILGIVQFFCSVVATIAFA), 591–611 (FLLWFLVFGCKFTESYFFLTL), 648–668 (VMFVMDLTLFFLDTFLWYVIW), 1268–1288 (NILVMMSVQVFMLALVFLGTL), 1323–1343 (CIISIFIVFWIAFVPLFVQEL), 1422–1442 (LVLLLFITLTVWVPHLIYFWI), 1446–1466 (GLCVAPFLFNPHQFAIADFII), 1527–1547 (IGEIIGPICLAILFVICYLFI), 1563–1583 (IAIIALGPIVWNMALLITLFL), 1605–1625 (ALAHFGAVAGMLVFFELLWFL), 1635–1655 (LGIIAVISVQRCIFKFLIAVF), 1704–1724 (DFIACHLLLALLTIPMFIPYF), and 1762–1782 (GLLYLIIQGIFIALIVVPIIF).

The protein belongs to the glycosyltransferase 48 family. As to quaternary structure, component of the 1,3-beta-glucan synthase (GS) complex composed of a catalytic subunit FKS1 and a regulatory subunit RHO1.

Its subcellular location is the cell membrane. The catalysed reaction is [(1-&gt;3)-beta-D-glucosyl](n) + UDP-alpha-D-glucose = [(1-&gt;3)-beta-D-glucosyl](n+1) + UDP + H(+). Its activity is regulated as follows. Activated by magnesium ions. Inhibited by caspofungin and cilofungin. In terms of biological role, catalytic subunit of the 1,3-beta-glucan synthase (GS) complex. Synthesizes 1,3-beta-glucan, a major structural component of the yeast cell wall. Involved in cell wall synthesis, maintenance and remodeling. This chain is 1,3-beta-glucan synthase component FKS1, found in Cryptococcus neoformans var. grubii serotype A (strain H99 / ATCC 208821 / CBS 10515 / FGSC 9487) (Filobasidiella neoformans var. grubii).